We begin with the raw amino-acid sequence, 285 residues long: Bifunctional protein FolD (285 aa).

NADP(+) is bound by residues 165 to 167, serine 190, and isoleucine 231; that span reads GRS.

It belongs to the tetrahydrofolate dehydrogenase/cyclohydrolase family. As to quaternary structure, homodimer.

It catalyses the reaction (6R)-5,10-methylene-5,6,7,8-tetrahydrofolate + NADP(+) = (6R)-5,10-methenyltetrahydrofolate + NADPH. It carries out the reaction (6R)-5,10-methenyltetrahydrofolate + H2O = (6R)-10-formyltetrahydrofolate + H(+). The protein operates within one-carbon metabolism; tetrahydrofolate interconversion. Functionally, catalyzes the oxidation of 5,10-methylenetetrahydrofolate to 5,10-methenyltetrahydrofolate and then the hydrolysis of 5,10-methenyltetrahydrofolate to 10-formyltetrahydrofolate. This chain is Bifunctional protein FolD, found in Verminephrobacter eiseniae (strain EF01-2).